A 209-amino-acid chain; its full sequence is Thiamine-phosphate synthase (209 aa).

Residues 39-43 (QLREK) and asparagine 71 contribute to the 4-amino-2-methyl-5-(diphosphooxymethyl)pyrimidine site. 2 residues coordinate Mg(2+): aspartate 72 and aspartate 91. Residue serine 110 participates in 4-amino-2-methyl-5-(diphosphooxymethyl)pyrimidine binding. Position 136–138 (136–138 (TGT)) interacts with 2-[(2R,5Z)-2-carboxy-4-methylthiazol-5(2H)-ylidene]ethyl phosphate. Residue lysine 139 participates in 4-amino-2-methyl-5-(diphosphooxymethyl)pyrimidine binding. Residues glycine 166 and 186 to 187 (VS) contribute to the 2-[(2R,5Z)-2-carboxy-4-methylthiazol-5(2H)-ylidene]ethyl phosphate site.

Belongs to the thiamine-phosphate synthase family. Mg(2+) serves as cofactor.

The enzyme catalyses 2-[(2R,5Z)-2-carboxy-4-methylthiazol-5(2H)-ylidene]ethyl phosphate + 4-amino-2-methyl-5-(diphosphooxymethyl)pyrimidine + 2 H(+) = thiamine phosphate + CO2 + diphosphate. The catalysed reaction is 2-(2-carboxy-4-methylthiazol-5-yl)ethyl phosphate + 4-amino-2-methyl-5-(diphosphooxymethyl)pyrimidine + 2 H(+) = thiamine phosphate + CO2 + diphosphate. It carries out the reaction 4-methyl-5-(2-phosphooxyethyl)-thiazole + 4-amino-2-methyl-5-(diphosphooxymethyl)pyrimidine + H(+) = thiamine phosphate + diphosphate. The protein operates within cofactor biosynthesis; thiamine diphosphate biosynthesis; thiamine phosphate from 4-amino-2-methyl-5-diphosphomethylpyrimidine and 4-methyl-5-(2-phosphoethyl)-thiazole: step 1/1. Its function is as follows. Condenses 4-methyl-5-(beta-hydroxyethyl)thiazole monophosphate (THZ-P) and 2-methyl-4-amino-5-hydroxymethyl pyrimidine pyrophosphate (HMP-PP) to form thiamine monophosphate (TMP). This is Thiamine-phosphate synthase from Clostridium beijerinckii (strain ATCC 51743 / NCIMB 8052) (Clostridium acetobutylicum).